Consider the following 724-residue polypeptide: Catalase-peroxidase (724 aa).

The disordered stretch occupies residues 1 to 20 (MDENKTKPAGKCPVMHGGNT). The tryptophyl-tyrosyl-methioninium (Trp-Tyr) (with M-251) cross-link spans 98–225 (WHSAGTYRTA…LAAVQMGLIY (128 aa)). The active-site Proton acceptor is His99. The segment at residues 225-251 (YVNPEGVDGNPDPLRTAQDMRVTFSRM) is a cross-link (tryptophyl-tyrosyl-methioninium (Tyr-Met) (with W-98)). His266 is a heme b binding site.

This sequence belongs to the peroxidase family. Peroxidase/catalase subfamily. Homodimer or homotetramer. Heme b serves as cofactor. Post-translationally, formation of the three residue Trp-Tyr-Met cross-link is important for the catalase, but not the peroxidase activity of the enzyme.

It catalyses the reaction H2O2 + AH2 = A + 2 H2O. It carries out the reaction 2 H2O2 = O2 + 2 H2O. Functionally, bifunctional enzyme with both catalase and broad-spectrum peroxidase activity. This chain is Catalase-peroxidase, found in Pectobacterium carotovorum subsp. carotovorum (strain PC1).